We begin with the raw amino-acid sequence, 497 residues long: Angiopoietin-1 (497 aa).

An N-terminal signal peptide occupies residues 1–19; sequence MTVFLSFAFLAAILTHIGC. Asn92, Asn122, Asn154, Asn243, and Asn294 each carry an N-linked (GlcNAc...) asparagine glycan. Positions 158–256 form a coiled coil; that stretch reads RLEIQLLENS…LQKQQLELMD (99 aa). A Fibrinogen C-terminal domain is found at 276–496; sequence KEEEKPFRDC…STTMMIRPLD (221 aa). Disulfide bonds link Cys285/Cys314 and Cys438/Cys451.

As to quaternary structure, homooligomer. Interacts with TEK/TIE2. Interacts with SVEP1/polydom. Interacts with THBD; this interaction significantly inhibits the generation of activated PC and TAFIa/CPB2 by the thrombin/thrombomodulin complex.

The protein resides in the secreted. In terms of biological role, binds and activates TIE2 receptor by inducing its tyrosine phosphorylation. Implicated in endothelial developmental processes later and distinct from that of VEGF. Appears to play a crucial role in mediating reciprocal interactions between the endothelium and surrounding matrix and mesenchyme. Mediates blood vessel maturation/stability. It may play an important role in the heart early development. In Canis lupus familiaris (Dog), this protein is Angiopoietin-1 (ANGPT1).